Consider the following 232-residue polypeptide: Enolase-phosphatase E1 (232 aa).

Belongs to the HAD-like hydrolase superfamily. MasA/MtnC family. In terms of assembly, monomer. Mg(2+) serves as cofactor.

The catalysed reaction is 5-methylsulfanyl-2,3-dioxopentyl phosphate + H2O = 1,2-dihydroxy-5-(methylsulfanyl)pent-1-en-3-one + phosphate. Its pathway is amino-acid biosynthesis; L-methionine biosynthesis via salvage pathway; L-methionine from S-methyl-5-thio-alpha-D-ribose 1-phosphate: step 3/6. It functions in the pathway amino-acid biosynthesis; L-methionine biosynthesis via salvage pathway; L-methionine from S-methyl-5-thio-alpha-D-ribose 1-phosphate: step 4/6. Its function is as follows. Bifunctional enzyme that catalyzes the enolization of 2,3-diketo-5-methylthiopentyl-1-phosphate (DK-MTP-1-P) into the intermediate 2-hydroxy-3-keto-5-methylthiopentenyl-1-phosphate (HK-MTPenyl-1-P), which is then dephosphorylated to form the acireductone 1,2-dihydroxy-3-keto-5-methylthiopentene (DHK-MTPene). This Xanthomonas oryzae pv. oryzae (strain KACC10331 / KXO85) protein is Enolase-phosphatase E1.